A 284-amino-acid chain; its full sequence is Bifunctional protein FolD (284 aa).

NADP(+) is bound by residues 166-168 and Ile-232; that span reads GAS.

Belongs to the tetrahydrofolate dehydrogenase/cyclohydrolase family. Homodimer.

The catalysed reaction is (6R)-5,10-methylene-5,6,7,8-tetrahydrofolate + NADP(+) = (6R)-5,10-methenyltetrahydrofolate + NADPH. It carries out the reaction (6R)-5,10-methenyltetrahydrofolate + H2O = (6R)-10-formyltetrahydrofolate + H(+). It participates in one-carbon metabolism; tetrahydrofolate interconversion. Its function is as follows. Catalyzes the oxidation of 5,10-methylenetetrahydrofolate to 5,10-methenyltetrahydrofolate and then the hydrolysis of 5,10-methenyltetrahydrofolate to 10-formyltetrahydrofolate. This Shewanella sp. (strain ANA-3) protein is Bifunctional protein FolD.